The sequence spans 151 residues: Small ribosomal subunit protein uS9 (151 aa).

It belongs to the universal ribosomal protein uS9 family.

This is Small ribosomal subunit protein uS9 (rps9) from Aeropyrum pernix (strain ATCC 700893 / DSM 11879 / JCM 9820 / NBRC 100138 / K1).